An 886-amino-acid polypeptide reads, in one-letter code: Alanine--tRNA ligase (886 aa).

H564, H568, C666, and H670 together coordinate Zn(2+).

It belongs to the class-II aminoacyl-tRNA synthetase family. The cofactor is Zn(2+).

Its subcellular location is the cytoplasm. The catalysed reaction is tRNA(Ala) + L-alanine + ATP = L-alanyl-tRNA(Ala) + AMP + diphosphate. Its function is as follows. Catalyzes the attachment of alanine to tRNA(Ala) in a two-step reaction: alanine is first activated by ATP to form Ala-AMP and then transferred to the acceptor end of tRNA(Ala). Also edits incorrectly charged Ser-tRNA(Ala) and Gly-tRNA(Ala) via its editing domain. This chain is Alanine--tRNA ligase, found in Prochlorococcus marinus (strain AS9601).